Here is a 417-residue protein sequence, read N- to C-terminus: UDP-N-acetylglucosamine 1-carboxyvinyltransferase (417 aa).

22–23 (KN) provides a ligand contact to phosphoenolpyruvate. Arg93 provides a ligand contact to UDP-N-acetyl-alpha-D-glucosamine. Cys117 acts as the Proton donor in catalysis. Residue Cys117 is modified to 2-(S-cysteinyl)pyruvic acid O-phosphothioketal. UDP-N-acetyl-alpha-D-glucosamine is bound by residues 122–126 (RPVDQ), Asp304, and Ile326.

The protein belongs to the EPSP synthase family. MurA subfamily.

The protein localises to the cytoplasm. It carries out the reaction phosphoenolpyruvate + UDP-N-acetyl-alpha-D-glucosamine = UDP-N-acetyl-3-O-(1-carboxyvinyl)-alpha-D-glucosamine + phosphate. It participates in cell wall biogenesis; peptidoglycan biosynthesis. In terms of biological role, cell wall formation. Adds enolpyruvyl to UDP-N-acetylglucosamine. The sequence is that of UDP-N-acetylglucosamine 1-carboxyvinyltransferase from Laribacter hongkongensis (strain HLHK9).